Here is a 336-residue protein sequence, read N- to C-terminus: Immune-associated nucleotide-binding protein 6 (336 aa).

The AIG1-type G domain occupies 33 to 241 (EPVKNVVLVG…FTDTMHRRIQ (209 aa)). The tract at residues 42-49 (GRTGNGKS) is G1. GTP is bound by residues 42 to 50 (GRTGNGKSA) and S63. The segment at 69–73 (GVTTR) is G2. The G3 stretch occupies residues 91 to 94 (DTPG). Residues 161 to 164 (TCGD) are G4. Residues 200 to 202 (DNR) are G5. N201 is a binding site for GTP. A coiled-coil region spans residues 237–270 (HRRIQEEAARVKREEKEIEEKNIADEEKAALKKQ).

The protein belongs to the TRAFAC class TrmE-Era-EngA-EngB-Septin-like GTPase superfamily. AIG1/Toc34/Toc159-like paraseptin GTPase family. IAN subfamily. Mostly expressed in pollen. Also detected in lateral roots and radicles.

The chain is Immune-associated nucleotide-binding protein 6 from Arabidopsis thaliana (Mouse-ear cress).